A 293-amino-acid polypeptide reads, in one-letter code: LysM and putative peptidoglycan-binding domain-containing protein 4 (293 aa).

The Extracellular portion of the chain corresponds to 1-214 (MRQKEVLAKS…VADGADCGIQ (214 aa)). Residues 28 to 65 (FNNGSGDSGDSSEEESHQVVLRPRGKEHQKNSSQRPGA) are disordered. Asn30 carries N-linked (GlcNAc...) asparagine glycosylation. A LysM domain is found at 71-115 (LQRELAQEDSLNKLALQYGCKVADIKKANNFIREQDLYALKSIKI). Residues 215-235 (WWNAVFLMLLIGIVLPVFYLV) traverse the membrane as a helical segment. Over 236 to 293 (YFKIQATGEPSNGLNATVVPNGSMTLSPVPGQAPRLAIPVPTLPASDSQVSPTTQAGA) the chain is Cytoplasmic.

Its subcellular location is the membrane. The protein is LysM and putative peptidoglycan-binding domain-containing protein 4 (Lysmd4) of Mus musculus (Mouse).